The chain runs to 481 residues: Abl interactor 1 (481 aa).

A2 is subject to N-acetylalanine. Positions 18–79 (ALIESYQNLT…NNVLQLLDIQ (62 aa)) are required for binding to WASF1. The region spanning 45 to 107 (KALEETKAYT…DIHKEKVARR (63 aa)) is the t-SNARE coiled-coil homology domain. Position 53 is a phosphotyrosine (Y53). The disordered stretch occupies residues 158 to 285 (AKHGNNQPAR…PGAAPGSQYG (128 aa)). Positions 161-175 (GNNQPARTGTLSRTN) are enriched in polar residues. Phosphothreonine is present on residues T174 and T178. Phosphoserine occurs at positions 183 and 187. Y213 is modified (phosphotyrosine). T215 is modified (phosphothreonine). Phosphoserine is present on residues S216, S222, and S225. Residues 222-235 (SQHSPGRTASLNQR) show a composition bias toward polar residues. 2 stretches are compositionally biased toward low complexity: residues 248 to 258 (SRENSGSSSIG) and 272 to 282 (GPAAPGAAPGS). Residues S292 and S296 each carry the phosphoserine modification. Disordered regions lie at residues 318 to 348 (AQPH…LTPQ) and 361 to 392 (NIAD…PPPV). 2 stretches are compositionally biased toward pro residues: residues 366-376 (PTPPPPPPPDD) and 383-392 (SPPPPPPPPV). Residues 419–478 (NYIEKVVAIYDYTKDKDDELSFKEGAIIYVIKKNDDGWFEGVCNRVTGLFPGNYVESIMH) form the SH3 domain. At Y428 the chain carries Phosphotyrosine. A Phosphoserine modification is found at S439. T480 carries the phosphothreonine modification.

It belongs to the ABI family. In terms of assembly, interacts with ENAH, Abelson murine leukemia virus V-ABL, ABL1, STX1A, SNAP25, VAMP2, and through its N-terminus with WASF1. Part of a complex consisting of ABI1, STX1A and SNAP25. Part of a complex consisting of ABI1, EPS8 and SOS1. Interacts with EPS8, SOS1, SOS2, GRB2, SPTA1, and the first SH3 domain of NCK1. Component of the WAVE2 complex composed of ABI1, CYFIP1/SRA1, NCKAP1/NAP1 (NCKAP1l/HEM1 in hematopoietic cells) and WASF2/WAVE2. Interacts (via SH3 domain) with SHANK2 and SHANK3, but not SHANK1; the interaction is direct. Interacts with the heterodimer MYC:MAX; the interaction may enhance MYC:MAX transcriptional activity. Interacts with FNBP1L (via the SH3 domain), WASF2, and CDC42, but only in the presence of FNBP1L. Phosphorylated on tyrosine residues after serum stimulation or induction by v-Abl. Seems to be phosphorylated at Tyr-53 by ABL1, required for nuclear but not for synaptic localization. Widely expressed with highest levels in bone marrow, spleen, brain, testes, and embryonic brain. In adult brain prominently expressed in the neocortex, hippocampus and dentate gyrus.

Its subcellular location is the cytoplasm. The protein resides in the nucleus. It is found in the cell projection. It localises to the lamellipodium. The protein localises to the filopodium. Its subcellular location is the growth cone. The protein resides in the postsynaptic density. It is found in the cytoskeleton. Its function is as follows. May act in negative regulation of cell growth and transformation by interacting with nonreceptor tyrosine kinases ABL1 and/or ABL2. In vitro, at least isoform 2 and isoform 4 suppress the transforming activity of Abelson murine leukemia virus (v-Abl) after overexpression in fibroblasts. May play a role in regulation EGF-induced Erk pathway activation. Involved in cytoskeletal reorganization and EGFR signaling. Together with EPS8 participates in transduction of signals from Ras to Rac. In vitro, a trimeric complex of ABI1, EPS8 and SOS1 exhibits Rac specific guanine nucleotide exchange factor (GEF) activity and ABI1 seems to act as an adapter in the complex. Regulates ABL1/c-Abl-mediated phosphorylation of ENAH. Recruits WASF1 to lamellipodia and there seems to regulate WASF1 protein level. In brain, seems to regulate the dendritic outgrowth and branching as well as to determine the shape and number of synaptic contacts of developing neurons. This is Abl interactor 1 from Mus musculus (Mouse).